The chain runs to 421 residues: Medium-chain specific acyl-CoA dehydrogenase, mitochondrial (421 aa).

The transit peptide at 1–25 (MAAGFGRCCRVLRSISRFQWRSQHT) directs the protein to the mitochondrion. Position 69 is an N6-acetyllysine; alternate (Lys-69). The residue at position 69 (Lys-69) is an N6-succinyllysine; alternate. 158-167 (YCVTEPGAGS) is an FAD binding site. An octanoyl-CoA-binding site is contributed by Ser-167. An N6-succinyllysine modification is found at Lys-179. 191–193 (WIT) contributes to the FAD binding site. Lys-212, Lys-217, and Lys-271 each carry N6-acetyllysine; alternate. Lys-212, Lys-217, and Lys-271 each carry N6-succinyllysine; alternate. Octanoyl-CoA is bound at residue Asp-278. Lys-279 carries the N6-acetyllysine modification. Arg-281 lines the octanoyl-CoA pocket. Lys-301 is modified (N6-acetyllysine). FAD is bound by residues 306–308 (RKT) and 316–317 (HQ). Octanoyl-CoA contacts are provided by Arg-349 and Thr-351. At Thr-351 the chain carries Phosphothreonine. Residue 374-378 (QILGG) participates in FAD binding. Glu-401 is an octanoyl-CoA binding site. The active-site Proton acceptor is Glu-401. 402–405 (GTSQ) lines the FAD pocket.

This sequence belongs to the acyl-CoA dehydrogenase family. As to quaternary structure, homotetramer. Interacts with the heterodimeric electron transfer flavoprotein ETF. The cofactor is FAD. Acetylated. Could occur at proximity of the cofactor-binding sites and reduce the catalytic activity. Could be deacetylated by SIRT3.

The protein resides in the mitochondrion matrix. It catalyses the reaction a medium-chain 2,3-saturated fatty acyl-CoA + oxidized [electron-transfer flavoprotein] + H(+) = a medium-chain (2E)-enoyl-CoA + reduced [electron-transfer flavoprotein]. The catalysed reaction is pentanoyl-CoA + oxidized [electron-transfer flavoprotein] + H(+) = (2E)-pentenoyl-CoA + reduced [electron-transfer flavoprotein]. It carries out the reaction hexanoyl-CoA + oxidized [electron-transfer flavoprotein] + H(+) = (2E)-hexenoyl-CoA + reduced [electron-transfer flavoprotein]. The enzyme catalyses octanoyl-CoA + oxidized [electron-transfer flavoprotein] + H(+) = (2E)-octenoyl-CoA + reduced [electron-transfer flavoprotein]. It catalyses the reaction decanoyl-CoA + oxidized [electron-transfer flavoprotein] + H(+) = (2E)-decenoyl-CoA + reduced [electron-transfer flavoprotein]. The catalysed reaction is dodecanoyl-CoA + oxidized [electron-transfer flavoprotein] + H(+) = (2E)-dodecenoyl-CoA + reduced [electron-transfer flavoprotein]. It carries out the reaction tetradecanoyl-CoA + oxidized [electron-transfer flavoprotein] + H(+) = (2E)-tetradecenoyl-CoA + reduced [electron-transfer flavoprotein]. The enzyme catalyses oxidized [electron-transfer flavoprotein] + hexadecanoyl-CoA + H(+) = (2E)-hexadecenoyl-CoA + reduced [electron-transfer flavoprotein]. The protein operates within lipid metabolism; mitochondrial fatty acid beta-oxidation. Functionally, medium-chain specific acyl-CoA dehydrogenase is one of the acyl-CoA dehydrogenases that catalyze the first step of mitochondrial fatty acid beta-oxidation, an aerobic process breaking down fatty acids into acetyl-CoA and allowing the production of energy from fats. The first step of fatty acid beta-oxidation consists in the removal of one hydrogen from C-2 and C-3 of the straight-chain fatty acyl-CoA thioester, resulting in the formation of trans-2-enoyl-CoA. Electron transfer flavoprotein (ETF) is the electron acceptor that transfers electrons to the main mitochondrial respiratory chain via ETF-ubiquinone oxidoreductase (ETF dehydrogenase). Among the different mitochondrial acyl-CoA dehydrogenases, medium-chain specific acyl-CoA dehydrogenase acts specifically on acyl-CoAs with saturated 6 to 12 carbons long primary chains. The sequence is that of Medium-chain specific acyl-CoA dehydrogenase, mitochondrial from Pan troglodytes (Chimpanzee).